Reading from the N-terminus, the 172-residue chain is Large ribosomal subunit protein uL10 (172 aa).

The protein belongs to the universal ribosomal protein uL10 family. As to quaternary structure, part of the ribosomal stalk of the 50S ribosomal subunit. The N-terminus interacts with L11 and the large rRNA to form the base of the stalk. The C-terminus forms an elongated spine to which L12 dimers bind in a sequential fashion forming a multimeric L10(L12)X complex.

Functionally, forms part of the ribosomal stalk, playing a central role in the interaction of the ribosome with GTP-bound translation factors. This Dinoroseobacter shibae (strain DSM 16493 / NCIMB 14021 / DFL 12) protein is Large ribosomal subunit protein uL10.